A 95-amino-acid polypeptide reads, in one-letter code: Synaptobrevin-A (95 aa).

Topologically, residues 1 to 70 are cytoplasmic; it reads MSEPVNKVKQ…KRLMWCRNIK (70 aa). The region spanning 7-67 is the v-SNARE coiled-coil homology domain; that stretch reads KVKQTQQQVD…NEIKRLMWCR (61 aa). The helical; Anchor for type IV membrane protein transmembrane segment at 71-91 threads the bilayer; the sequence is LTLIIIAVVVLLLVVIIVPIV. The Vesicular portion of the chain corresponds to 92-95; it reads LKFT.

Belongs to the synaptobrevin family.

The protein localises to the cytoplasmic vesicle. The protein resides in the secretory vesicle membrane. In terms of biological role, involved in the targeting and/or fusion of transport vesicles to their target membrane. The polypeptide is Synaptobrevin-A (sybA) (Dictyostelium discoideum (Social amoeba)).